The sequence spans 362 residues: Acetylglutamate kinase (362 aa).

A compositionally biased stretch (pro residues) spans 1–11 (MNAPTRTPPPS). Positions 1-42 (MNAPTRTPPPSNGGHGSTGSTGSTGDAAPGGGTGRGPAATAR) are disordered. Substrate contacts are provided by residues 106–107 (GG), Arg128, and Asn227. Residues 329 to 362 (MAESGTSPEPGTPPAPAARPAGIVPAGEPTGGTP) form a disordered region. The span at 346–355 (ARPAGIVPAG) shows a compositional bias: low complexity.

Belongs to the acetylglutamate kinase family. ArgB subfamily.

The protein resides in the cytoplasm. It carries out the reaction N-acetyl-L-glutamate + ATP = N-acetyl-L-glutamyl 5-phosphate + ADP. The protein operates within amino-acid biosynthesis; L-arginine biosynthesis; N(2)-acetyl-L-ornithine from L-glutamate: step 2/4. Catalyzes the ATP-dependent phosphorylation of N-acetyl-L-glutamate. This Frankia casuarinae (strain DSM 45818 / CECT 9043 / HFP020203 / CcI3) protein is Acetylglutamate kinase.